Reading from the N-terminus, the 163-residue chain is Phosphopantetheine adenylyltransferase (163 aa).

S11 serves as a coordination point for substrate. ATP-binding positions include S11–F12 and H19. Residues K43, L75, and R89 each coordinate substrate. Residues G90–R92, E100, and F125–S131 contribute to the ATP site.

This sequence belongs to the bacterial CoaD family. As to quaternary structure, homohexamer. Requires Mg(2+) as cofactor.

The protein localises to the cytoplasm. It catalyses the reaction (R)-4'-phosphopantetheine + ATP + H(+) = 3'-dephospho-CoA + diphosphate. It functions in the pathway cofactor biosynthesis; coenzyme A biosynthesis; CoA from (R)-pantothenate: step 4/5. Reversibly transfers an adenylyl group from ATP to 4'-phosphopantetheine, yielding dephospho-CoA (dPCoA) and pyrophosphate. The protein is Phosphopantetheine adenylyltransferase of Geobacter metallireducens (strain ATCC 53774 / DSM 7210 / GS-15).